The primary structure comprises 327 residues: L-serine dehydratase/L-threonine deaminase (327 aa).

N6-(pyridoxal phosphate)lysine is present on K41.

This sequence belongs to the serine/threonine dehydratase family. As to quaternary structure, homodimer. Requires pyridoxal 5'-phosphate as cofactor.

It is found in the cytoplasm. It catalyses the reaction L-serine = pyruvate + NH4(+). The enzyme catalyses L-threonine = 2-oxobutanoate + NH4(+). It functions in the pathway carbohydrate biosynthesis; gluconeogenesis. Its function is as follows. Catalyzes the pyridoxal-phosphate-dependent dehydrative deamination of L-threonine and L-serine to ammonia and alpha-ketobutyrate and pyruvate, respectively. The chain is L-serine dehydratase/L-threonine deaminase (SDS) from Bos taurus (Bovine).